The sequence spans 365 residues: NAD(P)H-quinone oxidoreductase subunit 1, chloroplastic (365 aa).

A run of 6 helical transmembrane segments spans residues 32 to 52 (LFPILILVLGITIGVLVIVWL), 98 to 118 (YLFSIGPSIAVISILLGYLII), 129 to 149 (LSIGVFLWIAVSSIAPIGLLM), 257 to 279 (LFYVASYLNLLISSLFVTVLYLG), 302 to 322 (VFGTTIGIFITLAKTFLFLFI), and 338 to 358 (LLNLGWKFLLPISLGNLLLTT).

Belongs to the complex I subunit 1 family. In terms of assembly, NDH is composed of at least 16 different subunits, 5 of which are encoded in the nucleus.

It localises to the plastid. Its subcellular location is the chloroplast thylakoid membrane. The catalysed reaction is a plastoquinone + NADH + (n+1) H(+)(in) = a plastoquinol + NAD(+) + n H(+)(out). It carries out the reaction a plastoquinone + NADPH + (n+1) H(+)(in) = a plastoquinol + NADP(+) + n H(+)(out). Functionally, NDH shuttles electrons from NAD(P)H:plastoquinone, via FMN and iron-sulfur (Fe-S) centers, to quinones in the photosynthetic chain and possibly in a chloroplast respiratory chain. The immediate electron acceptor for the enzyme in this species is believed to be plastoquinone. Couples the redox reaction to proton translocation, and thus conserves the redox energy in a proton gradient. This chain is NAD(P)H-quinone oxidoreductase subunit 1, chloroplastic, found in Spinacia oleracea (Spinach).